We begin with the raw amino-acid sequence, 504 residues long: Amyloid-beta A4 precursor protein-binding family B member 3 (504 aa).

The 33-residue stretch at 29-61 folds into the WW domain; it reads TGLPPGWRKIRDAAGTYYWHVPSGSTQWQRPTW. PID domains lie at 111-278 and 283-438; these read EPGA…QVEL and SQAA…RTSS.

In terms of assembly, interacts with APP (via intracellular domain). Interacts with APLP1 and APLP2 (via intracellular domain). Expressed predominantly in brain and testis.

The protein resides in the cytoplasm. The protein localises to the nucleus. Its function is as follows. May modulate the internalization of amyloid-beta precursor protein. This is Amyloid-beta A4 precursor protein-binding family B member 3 from Rattus norvegicus (Rat).